Here is a 600-residue protein sequence, read N- to C-terminus: NADH-quinone oxidoreductase subunit C/D (600 aa).

An NADH dehydrogenase I subunit C region spans residues 1–190; sequence MIDLMPKKNT…EPFFLNEQKE (190 aa). The interval 214-600 is NADH dehydrogenase I subunit D; it reads EFMFLNLGPN…IDFVMSDVDR (387 aa).

The protein in the N-terminal section; belongs to the complex I 30 kDa subunit family. It in the C-terminal section; belongs to the complex I 49 kDa subunit family. NDH-1 is composed of 13 different subunits. Subunits NuoB, CD, E, F, and G constitute the peripheral sector of the complex.

It localises to the cell membrane. The catalysed reaction is a quinone + NADH + 5 H(+)(in) = a quinol + NAD(+) + 4 H(+)(out). Its function is as follows. NDH-1 shuttles electrons from NADH, via FMN and iron-sulfur (Fe-S) centers, to quinones in the respiratory chain. The immediate electron acceptor for the enzyme in this species is believed to be ubiquinone. Couples the redox reaction to proton translocation (for every two electrons transferred, four hydrogen ions are translocated across the cytoplasmic membrane), and thus conserves the redox energy in a proton gradient. This chain is NADH-quinone oxidoreductase subunit C/D, found in Buchnera aphidicola subsp. Acyrthosiphon pisum (strain 5A).